The chain runs to 848 residues: MNKSSSASTVPPHSTPHTAHSTSSSSLPPLSSTHHTNTSSTSNNNNNSNNNHNHNHHHTTAATTTTSTTGTGTTAATTSTSTSSTIPINTAGIHTSNSNLATATNTPSSSPQVSTSVERRFWMNDRGSRRSSTSLTQQPLTMNRSSNKLHAAVSARDLTRLKQRLSQPRKAKIELAEYDSMDQTPLCAALRNGSHDIVREILFFYQSNKMDINDQDKSGYTPLHVAASHCDDQILMLLLNYEGINVNITNEDKNSALHYFCQKFRSPNCQEPFSIFLKKGVNVNAQNKNGETPLHKSIFNNTVRLLMVNMLLDAGAEVNVLNSRGESPLHFAVRLGREDLVSVLVKAGADITIKGNEKKTCYELSLTIGNQRVINFLKNVQDIFNWLKSIDLEQYWLNFVKEEIFMDLLLDIDERTLDSLGITYSGHRLKIIRNCRILRDQQLLSTANSNVTTGSGSSGSTTTTTTTTTTTSGCGGLNVPENKKVTQLSIESLKSNPPNSMDSTGSISSDDLKESLTNLEHWVIDHSELEYTLKLGSGSSGKVYKGLYKGKEVAVKVLKSITTQSQLEEFKKEFQIMGSIRSQFMVTFYGACIEPKLCMVMEYCSRDSLYHVMNTKKYDIGWDRFFQFTMQMTLGVQCLHNWTPQIVHRDFKSLNLLVNEDWECKVSDFGLSRFNTADNLETLSKIRGTFAYCSPEVAVGNGSLYTTKSDIYSIGIVFWELVTRVINGEYSRPYSEYSHIKMDFQIMLNSKEGLRPTLPQNTPPGLEALYKQCVNQEQTLRPSCEEIIETLNRLRHEYMSSKTTWDSLIRKLPSLSPPPQPTTTTTTTTSSSTSTNNINNNINNNNNT.

3 stretches are compositionally biased toward low complexity: residues 1–52, 60–85, and 95–116; these read MNKS…NNNH, TAAT…TSST, and TSNS…VSTS. Residues 1 to 117 form a disordered region; that stretch reads MNKSSSASTV…SSSPQVSTSV (117 aa). ANK repeat units follow at residues 181-212, 218-248, 252-285, 289-320, and 324-353; these read MDQT…KMDI, SGYT…NVNI, DKNS…NVNA, NGET…EVNV, and RGES…DITI. The region spanning 378–441 is the SAM domain; sequence KNVQDIFNWL…IRNCRILRDQ (64 aa). The tract at residues 448-478 is disordered; the sequence is NSNVTTGSGSSGSTTTTTTTTTTTSGCGGLN. A compositionally biased stretch (low complexity) spans 452–472; that stretch reads TTGSGSSGSTTTTTTTTTTTS. The Protein kinase domain maps to 529–799; the sequence is LEYTLKLGSG…TLNRLRHEYM (271 aa). Residues 535-543 and lysine 556 each bind ATP; that span reads LGSGSSGKV. Catalysis depends on aspartate 650, which acts as the Proton acceptor. The tract at residues 810 to 848 is disordered; the sequence is RKLPSLSPPPQPTTTTTTTTSSSTSTNNINNNINNNNNT. The span at 822-848 shows a compositional bias: low complexity; that stretch reads TTTTTTTTSSSTSTNNINNNINNNNNT.

It belongs to the protein kinase superfamily. TKL Ser/Thr protein kinase family.

It catalyses the reaction L-seryl-[protein] + ATP = O-phospho-L-seryl-[protein] + ADP + H(+). The catalysed reaction is L-threonyl-[protein] + ATP = O-phospho-L-threonyl-[protein] + ADP + H(+). The chain is Probable serine/threonine-protein kinase DDB_G0278535 from Dictyostelium discoideum (Social amoeba).